The following is an 89-amino-acid chain: UPF0298 protein GK1096 (89 aa).

This sequence belongs to the UPF0298 family.

The protein localises to the cytoplasm. This is UPF0298 protein GK1096 from Geobacillus kaustophilus (strain HTA426).